The sequence spans 397 residues: Subtilisin-like protease 3 (397 aa).

The signal sequence occupies residues 1-19 (MGCIKVISVFLAAVAAVDA). Positions 20–116 (RAFFHNRGGN…VEHDRVVKLA (97 aa)) are excised as a propeptide. The Inhibitor I9 domain occupies 35–116 (SYIVVMKDGV…VEHDRVVKLA (82 aa)). The 272-residue stretch at 126 to 397 (TWGLGRVSHK…NKLLYNGSGR (272 aa)) folds into the Peptidase S8 domain. Active-site charge relay system residues include Asp-158 and His-189. Asn-250 carries N-linked (GlcNAc...) asparagine glycosylation. Ser-344 functions as the Charge relay system in the catalytic mechanism. A glycan (N-linked (GlcNAc...) asparagine) is linked at Asn-393.

It belongs to the peptidase S8 family.

Its subcellular location is the secreted. Secreted subtilisin-like serine protease with keratinolytic activity that contributes to pathogenicity. The chain is Subtilisin-like protease 3 (SUB3) from Arthroderma otae (strain ATCC MYA-4605 / CBS 113480) (Microsporum canis).